A 704-amino-acid polypeptide reads, in one-letter code: Elongation factor G (704 aa).

One can recognise a tr-type G domain in the interval 8–290 (EKYRNIGICA…GVVRYLPAPN (283 aa)). Residues 17–24 (AHVDAGKT), 88–92 (DTPGH), and 142–145 (NKMD) contribute to the GTP site.

This sequence belongs to the TRAFAC class translation factor GTPase superfamily. Classic translation factor GTPase family. EF-G/EF-2 subfamily.

Its subcellular location is the cytoplasm. Functionally, catalyzes the GTP-dependent ribosomal translocation step during translation elongation. During this step, the ribosome changes from the pre-translocational (PRE) to the post-translocational (POST) state as the newly formed A-site-bound peptidyl-tRNA and P-site-bound deacylated tRNA move to the P and E sites, respectively. Catalyzes the coordinated movement of the two tRNA molecules, the mRNA and conformational changes in the ribosome. The sequence is that of Elongation factor G from Francisella tularensis subsp. mediasiatica (strain FSC147).